The sequence spans 1256 residues: Pullulanase A (1256 aa).

The first 44 residues, 1–44, serve as a signal peptide directing secretion; it reads MRKTPSHTEKKMVYSIRSLKNGTGSVLIGASLVLLAMATPTISS. The tract at residues 42–117 is disordered; the sequence is ISSDESTPTT…VTTETKAEEP (76 aa). Residues 48-61 show a composition bias toward low complexity; that stretch reads TPTTNEPNNRNTTT. Residues 79 to 90 are compositionally biased toward polar residues; the sequence is DISSPRNANASL. The segment covering 99–111 has biased composition (low complexity); it reads TEPTTSTSPVTTE. Substrate is bound by residues 141-143, Trp153, Asp199, 248-250, Trp261, Lys303, and Asn308; these read WTW and WYW. Positions 646 and 648 each coordinate Ca(2+). Substrate-binding positions include 652 to 653 and Phe728; that span reads YD. The active-site Nucleophile is the Asp763. Glu792 functions as the Proton donor in the catalytic mechanism. Trp794 is a substrate binding site. Ca(2+) contacts are provided by Met813, Thr816, and Asp817. 3 residues coordinate substrate: Asp824, Arg827, and Tyr834. Ca(2+)-binding residues include Asp867 and Asp871. Substrate-binding positions include Asn881, Lys954, and 974–976; that span reads DSY. Residue Asp977 participates in Ca(2+) binding. The disordered stretch occupies residues 1126–1224; that stretch reads SQNGTSHEST…TPDRQAELPN (99 aa). Residues 1134–1172 are compositionally biased toward basic and acidic residues; it reads STAEEKPDSTPSKPEHQDPAPEARPDSTKPDAKVADAEN. A compositionally biased stretch (low complexity) spans 1181-1194; it reads SQAEQPAQEAQASS. A compositionally biased stretch (polar residues) spans 1200–1210; the sequence is QNESVENSSKK. Residues 1222 to 1226 carry the LPXTG sorting signal motif; the sequence is LPNTG. Thr1225 carries the pentaglycyl murein peptidoglycan amidated threonine modification. A propeptide spans 1226-1256 (removed by sortase); that stretch reads GIKNENKLLFAGISLLALLGLGFLLKNKKEN.

Belongs to the glycosyl hydrolase 13 family.

It localises to the secreted. The protein localises to the cell wall. The protein resides in the cell surface. It carries out the reaction Hydrolysis of (1-&gt;6)-alpha-D-glucosidic linkages in pullulan, amylopectin and glycogen, and in the alpha- and beta-limit dextrins of amylopectin and glycogen.. Its activity is regulated as follows. Inhibited by 4-O-alpha-D-glucopyranosylmoranoline (G1M). In terms of biological role, virulence factor. Involved in the degradation of glycogen of the mammalian host cells. Hydrolyzes the alpha-1,6-branchpoints of glycogen. Hydrolyzes pullulan. Does not hydrolyze dextran. Binds to mouse lung alveolar type II cells that are rich in glycogen stores. Is an alpha-glucan-specific carbohydrate-binding protein, which binds to amylose (pure alpha-(1,4)-linked glucose), amylopectin (alpha-(1,4)-linked glucose with alpha-(1,6) branch points), pullulan (linear polymer of mixed alpha-(1,4)- and alpha-(1,6)-linked glucose) and glycogen (similar to amylopectin with more frequent alpha-(1,6) branch points) in vitro. Does not bind to dextran (a linear polymer of alpha-(1,6)-linked glucose). The chain is Pullulanase A from Streptococcus pneumoniae serotype 2 (strain D39 / NCTC 7466).